The following is a 465-amino-acid chain: tRNA-2-methylthio-N(6)-dimethylallyladenosine synthase (465 aa).

An MTTase N-terminal domain is found at 26 to 141 (MRAHIITYGC…LPEALKANER (116 aa)). 6 residues coordinate [4Fe-4S] cluster: Cys35, Cys71, Cys104, Cys173, Cys177, and Cys180. The Radical SAM core domain occupies 159–388 (PKGALSAHVT…IEKQKEWSYR (230 aa)). In terms of domain architecture, TRAM spans 391–453 (LEWVGKTVEV…PHLLFGEVVG (63 aa)).

The protein belongs to the methylthiotransferase family. MiaB subfamily. In terms of assembly, monomer. [4Fe-4S] cluster is required as a cofactor.

It is found in the cytoplasm. It carries out the reaction N(6)-dimethylallyladenosine(37) in tRNA + (sulfur carrier)-SH + AH2 + 2 S-adenosyl-L-methionine = 2-methylsulfanyl-N(6)-dimethylallyladenosine(37) in tRNA + (sulfur carrier)-H + 5'-deoxyadenosine + L-methionine + A + S-adenosyl-L-homocysteine + 2 H(+). Catalyzes the methylthiolation of N6-(dimethylallyl)adenosine (i(6)A), leading to the formation of 2-methylthio-N6-(dimethylallyl)adenosine (ms(2)i(6)A) at position 37 in tRNAs that read codons beginning with uridine. In Thermus thermophilus (strain ATCC BAA-163 / DSM 7039 / HB27), this protein is tRNA-2-methylthio-N(6)-dimethylallyladenosine synthase.